The chain runs to 685 residues: Bifunctional diguanylate cyclase/cyclic di-GMP phosphodiesterase MucR (685 aa).

One can recognise an MHYT domain in the interval 6–199; sequence YNQVLVAFSL…YTGMAAAQFP (194 aa). 7 helical membrane passes run 9-29, 44-64, 77-97, 117-137, 141-161, 175-195, and 214-234; these read VLVA…LDMA, LIGG…VGML, GLTL…LWLV, GIAA…GIVY, WLGL…WIAF, AGAA…GMAA, and GWLA…ALIV. Topologically, residues 235–685 are cytoplasmic; it reads SVLDSRLEAR…PAEQLLASVA (451 aa). Residues 293–425 enclose the GGDEF domain; the sequence is RRFAVLFMDL…GRNGYCFFES (133 aa). Residues 434 to 685 form the EAL domain; sequence QLQLLHDLRQ…PAEQLLASVA (252 aa). Positions 455, 469, 472, 473, 528, and 533 each coordinate 3',3'-c-di-GMP. Glu-469 lines the Mg(2+) pocket. Asn-528 provides a ligand contact to Mg(2+). The Mg(2+) site is built by Glu-560, Asp-590, and Asp-591. Asp-590 lines the 3',3'-c-di-GMP pocket. 3',3'-c-di-GMP is bound at residue Arg-614. Glu-647 lines the Mg(2+) pocket. Residues Glu-650 and Phe-669 each coordinate 3',3'-c-di-GMP.

Homodimer. It depends on Mg(2+) as a cofactor.

It localises to the cell inner membrane. It carries out the reaction 2 GTP = 3',3'-c-di-GMP + 2 diphosphate. The enzyme catalyses 3',3'-c-di-GMP + H2O = 5'-phosphoguanylyl(3'-&gt;5')guanosine + H(+). Its function is as follows. Displays both diguanylate cyclase (DGC) and c-di-GMP-specific phosphodiesterase (PDE) activity. Probably modulates DGC and PDE activities, and thus c-di-GMP levels, in a growth mode-dependent manner. May act as a PDE under planktonic growth conditions and as a DGC in biofilms. During biofilm formation, it specifically activates alginate biosynthesis via generation of a localized c-di-GMP pool in the vicinity of the alginate biosynthesis protein Alg44. This is Bifunctional diguanylate cyclase/cyclic di-GMP phosphodiesterase MucR from Pseudomonas aeruginosa (strain ATCC 15692 / DSM 22644 / CIP 104116 / JCM 14847 / LMG 12228 / 1C / PRS 101 / PAO1).